The following is a 263-amino-acid chain: Hydroxyethylthiazole kinase 1 (263 aa).

Methionine 42 lines the substrate pocket. Lysine 118 and threonine 164 together coordinate ATP. Residue glycine 191 coordinates substrate.

It belongs to the Thz kinase family. Requires Mg(2+) as cofactor.

It catalyses the reaction 5-(2-hydroxyethyl)-4-methylthiazole + ATP = 4-methyl-5-(2-phosphooxyethyl)-thiazole + ADP + H(+). Its pathway is cofactor biosynthesis; thiamine diphosphate biosynthesis; 4-methyl-5-(2-phosphoethyl)-thiazole from 5-(2-hydroxyethyl)-4-methylthiazole: step 1/1. Catalyzes the phosphorylation of the hydroxyl group of 4-methyl-5-beta-hydroxyethylthiazole (THZ). In Clostridium botulinum (strain ATCC 19397 / Type A), this protein is Hydroxyethylthiazole kinase 1.